Consider the following 432-residue polypeptide: UDP-N-acetylglucosamine 1-carboxyvinyltransferase (432 aa).

Residue 22–23 participates in phosphoenolpyruvate binding; that stretch reads KN. R101 is a binding site for UDP-N-acetyl-alpha-D-glucosamine. C125 (proton donor) is an active-site residue. Position 125 is a 2-(S-cysteinyl)pyruvic acid O-phosphothioketal (C125). UDP-N-acetyl-alpha-D-glucosamine-binding positions include 130–134, D315, and I337; that span reads RPVDL.

The protein belongs to the EPSP synthase family. MurA subfamily.

The protein resides in the cytoplasm. The catalysed reaction is phosphoenolpyruvate + UDP-N-acetyl-alpha-D-glucosamine = UDP-N-acetyl-3-O-(1-carboxyvinyl)-alpha-D-glucosamine + phosphate. The protein operates within cell wall biogenesis; peptidoglycan biosynthesis. Functionally, cell wall formation. Adds enolpyruvyl to UDP-N-acetylglucosamine. The polypeptide is UDP-N-acetylglucosamine 1-carboxyvinyltransferase (Paramagnetospirillum magneticum (strain ATCC 700264 / AMB-1) (Magnetospirillum magneticum)).